Reading from the N-terminus, the 95-residue chain is Aspartyl/glutamyl-tRNA(Asn/Gln) amidotransferase subunit C (95 aa).

Belongs to the GatC family. As to quaternary structure, heterotrimer of A, B and C subunits.

The enzyme catalyses L-glutamyl-tRNA(Gln) + L-glutamine + ATP + H2O = L-glutaminyl-tRNA(Gln) + L-glutamate + ADP + phosphate + H(+). It catalyses the reaction L-aspartyl-tRNA(Asn) + L-glutamine + ATP + H2O = L-asparaginyl-tRNA(Asn) + L-glutamate + ADP + phosphate + 2 H(+). Functionally, allows the formation of correctly charged Asn-tRNA(Asn) or Gln-tRNA(Gln) through the transamidation of misacylated Asp-tRNA(Asn) or Glu-tRNA(Gln) in organisms which lack either or both of asparaginyl-tRNA or glutaminyl-tRNA synthetases. The reaction takes place in the presence of glutamine and ATP through an activated phospho-Asp-tRNA(Asn) or phospho-Glu-tRNA(Gln). In Geobacter sulfurreducens (strain ATCC 51573 / DSM 12127 / PCA), this protein is Aspartyl/glutamyl-tRNA(Asn/Gln) amidotransferase subunit C.